The following is a 222-amino-acid chain: Protein GrpE (222 aa).

The disordered stretch occupies residues 1 to 21 (MSDEKNKFTDASFENCDLKNP).

Belongs to the GrpE family. As to quaternary structure, homodimer.

It is found in the cytoplasm. Its function is as follows. Participates actively in the response to hyperosmotic and heat shock by preventing the aggregation of stress-denatured proteins, in association with DnaK and GrpE. It is the nucleotide exchange factor for DnaK and may function as a thermosensor. Unfolded proteins bind initially to DnaJ; upon interaction with the DnaJ-bound protein, DnaK hydrolyzes its bound ATP, resulting in the formation of a stable complex. GrpE releases ADP from DnaK; ATP binding to DnaK triggers the release of the substrate protein, thus completing the reaction cycle. Several rounds of ATP-dependent interactions between DnaJ, DnaK and GrpE are required for fully efficient folding. This Bartonella tribocorum (strain CIP 105476 / IBS 506) protein is Protein GrpE.